We begin with the raw amino-acid sequence, 654 residues long: Probable Xaa-Pro aminopeptidase P (654 aa).

Positions 449, 460, 558, and 572 each coordinate Mn(2+).

Belongs to the peptidase M24B family. Requires Mn(2+) as cofactor.

The catalysed reaction is Release of any N-terminal amino acid, including proline, that is linked to proline, even from a dipeptide or tripeptide.. Functionally, catalyzes the removal of a penultimate prolyl residue from the N-termini of peptides. The chain is Probable Xaa-Pro aminopeptidase P (ampp) from Neosartorya fischeri (strain ATCC 1020 / DSM 3700 / CBS 544.65 / FGSC A1164 / JCM 1740 / NRRL 181 / WB 181) (Aspergillus fischerianus).